Reading from the N-terminus, the 544-residue chain is CTP synthase (544 aa).

Residues Met1 to Leu267 are amidoligase domain. Ser13 contributes to the CTP binding site. Ser13 serves as a coordination point for UTP. Residue Ser14 to Ile19 participates in ATP binding. Tyr54 lines the L-glutamine pocket. Asp71 serves as a coordination point for ATP. Asp71 and Glu141 together coordinate Mg(2+). CTP-binding positions include Asp148–Glu150, Lys188–Gln193, and Lys224. Residues Lys188–Gln193 and Lys224 each bind UTP. One can recognise a Glutamine amidotransferase type-1 domain in the interval Tyr299–Asp534. Gly354 is a binding site for L-glutamine. Residue Cys381 is the Nucleophile; for glutamine hydrolysis of the active site. L-glutamine contacts are provided by residues Leu382–Gln385, Glu405, and Arg462. Residues His507 and Glu509 contribute to the active site.

It belongs to the CTP synthase family. Homotetramer.

It carries out the reaction UTP + L-glutamine + ATP + H2O = CTP + L-glutamate + ADP + phosphate + 2 H(+). The enzyme catalyses L-glutamine + H2O = L-glutamate + NH4(+). It catalyses the reaction UTP + NH4(+) + ATP = CTP + ADP + phosphate + 2 H(+). It functions in the pathway pyrimidine metabolism; CTP biosynthesis via de novo pathway; CTP from UDP: step 2/2. Its activity is regulated as follows. Allosterically activated by GTP, when glutamine is the substrate; GTP has no effect on the reaction when ammonia is the substrate. The allosteric effector GTP functions by stabilizing the protein conformation that binds the tetrahedral intermediate(s) formed during glutamine hydrolysis. Inhibited by the product CTP, via allosteric rather than competitive inhibition. Catalyzes the ATP-dependent amination of UTP to CTP with either L-glutamine or ammonia as the source of nitrogen. Regulates intracellular CTP levels through interactions with the four ribonucleotide triphosphates. The polypeptide is CTP synthase (Dehalococcoides mccartyi (strain ATCC BAA-2100 / JCM 16839 / KCTC 5957 / BAV1)).